The chain runs to 2873 residues: WD repeat-containing protein 87 (2873 aa).

WD repeat units follow at residues 108-146 (PCRF…TGLQ), 199-239 (TSSG…PLHS), 242-283 (AHQS…RRLE), 368-407 (SILD…CPAK), 415-460 (NSQD…RLEK), 516-553 (LSSC…SSGS), and 565-604 (LHLC…IGIL). 5 disordered regions span residues 1049 to 1124 (FSLD…ESGT), 1177 to 1199 (DKRD…GKEA), 1392 to 1413 (EKKT…ERKV), 1531 to 1607 (SKSK…QEER), and 2199 to 2338 (KRKE…EEVD). Basic residues-rich tracts occupy residues 1089-1101 (VKKH…RGLK) and 1187-1197 (KLKKKHKKKGK). Over residues 1549 to 1574 (EVSREGEEKEQQVTEEQRHIQEEHKW) the composition is skewed to basic and acidic residues. Over residues 1575–1586 (ARIHRKRARAEK) the composition is skewed to basic residues. Basic and acidic residues-rich tracts occupy residues 1587 to 1607 (KRAQ…QEER) and 2204 to 2213 (KRGDKPKEKF). The span at 2244-2276 (SSEEEEEREEEEEREEEEEREEEEERKEEEEGE) shows a compositional bias: acidic residues. Positions 2277–2287 (EKQVEKEEEEK) are enriched in basic and acidic residues. The span at 2304-2337 (EVFEEKEEIMSEEETESLSDEEEEEESCSLEEEV) shows a compositional bias: acidic residues.

The protein is WD repeat-containing protein 87 (WDR87) of Homo sapiens (Human).